Here is a 260-residue protein sequence, read N- to C-terminus: Ribonuclease HII (260 aa).

One can recognise an RNase H type-2 domain in the interval 75–260 (ELIAGVDEVG…FEPIKSIIKK (186 aa)). A divalent metal cation is bound by residues D81, E82, and D173.

Belongs to the RNase HII family. Mn(2+) serves as cofactor. It depends on Mg(2+) as a cofactor.

The protein localises to the cytoplasm. It catalyses the reaction Endonucleolytic cleavage to 5'-phosphomonoester.. Endonuclease that specifically degrades the RNA of RNA-DNA hybrids. This Streptococcus thermophilus (strain CNRZ 1066) protein is Ribonuclease HII.